The chain runs to 391 residues: Digeranylgeranylglycerophospholipid reductase (391 aa).

Residues Gly-19, Asp-38, Cys-49, Ala-50, Ala-52, Arg-99, Val-123, Asp-279, Gly-291, and Ile-292 each contribute to the FAD site. Val-369 serves as a coordination point for a 2,3-bis-O-(geranylgeranyl)-sn-glycerol 1-phospholipid.

It belongs to the geranylgeranyl reductase family. DGGGPL reductase subfamily. It depends on FAD as a cofactor.

The catalysed reaction is a 2,3-bis-O-phytanyl-sn-glycerol 1-phospholipid + 8 A = a 2,3-bis-O-(geranylgeranyl)-sn-glycerol 1-phospholipid + 8 AH2. It catalyses the reaction 2,3-bis-O-(phytanyl)-sn-glycerol 1-phosphate + 8 A = 2,3-bis-O-(geranylgeranyl)-sn-glycerol 1-phosphate + 8 AH2. It carries out the reaction CDP-2,3-bis-O-(geranylgeranyl)-sn-glycerol + 8 AH2 = CDP-2,3-bis-O-(phytanyl)-sn-glycerol + 8 A. The enzyme catalyses archaetidylserine + 8 AH2 = 2,3-bis-O-phytanyl-sn-glycero-3-phospho-L-serine + 8 A. The protein operates within membrane lipid metabolism; glycerophospholipid metabolism. In terms of biological role, is involved in the reduction of 2,3-digeranylgeranylglycerophospholipids (unsaturated archaeols) into 2,3-diphytanylglycerophospholipids (saturated archaeols) in the biosynthesis of archaeal membrane lipids. Catalyzes the formation of archaetidic acid (2,3-di-O-phytanyl-sn-glyceryl phosphate) from 2,3-di-O-geranylgeranylglyceryl phosphate (DGGGP) via the hydrogenation of each double bond of the isoprenoid chains. Is also probably able to reduce double bonds of geranyl groups in CDP-2,3-bis-O-(geranylgeranyl)-sn-glycerol and archaetidylserine, thus acting at various stages in the biosynthesis of archaeal membrane lipids. This Methanococcus aeolicus (strain ATCC BAA-1280 / DSM 17508 / OCM 812 / Nankai-3) protein is Digeranylgeranylglycerophospholipid reductase.